The chain runs to 520 residues: Maturase K (520 aa).

The protein belongs to the intron maturase 2 family. MatK subfamily.

Its subcellular location is the plastid. The protein resides in the chloroplast. In terms of biological role, usually encoded in the trnK tRNA gene intron. Probably assists in splicing its own and other chloroplast group II introns. The sequence is that of Maturase K from Cycas taitungensis (Prince sago).